The primary structure comprises 116 residues: Somatostatin (116 aa).

The signal sequence occupies residues 1 to 24 (MLSCRLQCALALLSIALAVGTVSA). Positions 25-88 (APSDPRLRQF…QDEVRLELER (64 aa)) are excised as a propeptide. Residues 60-82 (PSQTENEALESEDLSRGAEQDEV) form a disordered region. Over residues 72–82 (DLSRGAEQDEV) the composition is skewed to basic and acidic residues. Cys-105 and Cys-116 are oxidised to a cystine.

It belongs to the somatostatin family.

Its subcellular location is the secreted. Functionally, somatostatin inhibits the release of somatotropin. The polypeptide is Somatostatin (SST) (Gallus gallus (Chicken)).